Reading from the N-terminus, the 323-residue chain is tRNA-modifying protein YgfZ (323 aa).

2 residues coordinate folate: tryptophan 29 and tryptophan 182.

It belongs to the tRNA-modifying YgfZ family.

It localises to the cytoplasm. Its function is as follows. Folate-binding protein involved in regulating the level of ATP-DnaA and in the modification of some tRNAs. It is probably a key factor in regulatory networks that act via tRNA modification, such as initiation of chromosomal replication. In Vibrio cholerae serotype O1 (strain ATCC 39541 / Classical Ogawa 395 / O395), this protein is tRNA-modifying protein YgfZ.